Here is a 280-residue protein sequence, read N- to C-terminus: F420-dependent methylenetetrahydromethanopterin dehydrogenase (280 aa).

This sequence belongs to the MTD family.

The catalysed reaction is 5,10-methylenetetrahydromethanopterin + oxidized coenzyme F420-(gamma-L-Glu)(n) + 2 H(+) = 5,10-methenyl-5,6,7,8-tetrahydromethanopterin + reduced coenzyme F420-(gamma-L-Glu)(n). The protein operates within one-carbon metabolism; methanogenesis from CO(2); 5,10-methylene-5,6,7,8-tetrahydromethanopterin from 5,10-methenyl-5,6,7,8-tetrahydromethanopterin (coenzyme F420 route): step 1/1. In terms of biological role, catalyzes the reversible reduction of methenyl-H(4)MPT(+) to methylene-H(4)MPT. This is F420-dependent methylenetetrahydromethanopterin dehydrogenase from Methanospirillum hungatei JF-1 (strain ATCC 27890 / DSM 864 / NBRC 100397 / JF-1).